The chain runs to 323 residues: Cytosolic sulfotransferase 5 (323 aa).

3'-phosphoadenylyl sulfate is bound at residue 69–74 (KCGTTW). Residue H135 is the Proton acceptor of the active site. 3'-phosphoadenylyl sulfate-binding positions include R157, S165, and 289–291 (RKG).

Belongs to the sulfotransferase 1 family. Expressed in inflorescence stems, roots and siliques.

It localises to the cytoplasm. Its function is as follows. Sulfotransferase that utilizes 3'-phospho-5'-adenylyl sulfate (PAPS) as sulfonate donor to specifically catalyze the sulfate conjugation of flavones and flavonols. Strictly specific for the position 7. Substrate preference is kaempferol 3-sulfate &gt; isorhamnetin &gt; kaempferol. This chain is Cytosolic sulfotransferase 5 (SOT5), found in Arabidopsis thaliana (Mouse-ear cress).